We begin with the raw amino-acid sequence, 389 residues long: Putative DNA processing protein DprA (389 aa).

Belongs to the DprA/Smf family.

In terms of biological role, may help load RecA onto ssDNA. The sequence is that of Putative DNA processing protein DprA from Mycobacterium tuberculosis (strain CDC 1551 / Oshkosh).